A 199-amino-acid chain; its full sequence is Elongation factor Ts (199 aa).

The segment at 80-83 is involved in Mg(2+) ion dislocation from EF-Tu; it reads TDFV.

It belongs to the EF-Ts family.

It is found in the cytoplasm. Its function is as follows. Associates with the EF-Tu.GDP complex and induces the exchange of GDP to GTP. It remains bound to the aminoacyl-tRNA.EF-Tu.GTP complex up to the GTP hydrolysis stage on the ribosome. The chain is Elongation factor Ts from Thermodesulfovibrio yellowstonii (strain ATCC 51303 / DSM 11347 / YP87).